The sequence spans 149 residues: Putative pre-16S rRNA nuclease (149 aa).

Belongs to the YqgF nuclease family.

It localises to the cytoplasm. Its function is as follows. Could be a nuclease involved in processing of the 5'-end of pre-16S rRNA. This Burkholderia orbicola (strain MC0-3) protein is Putative pre-16S rRNA nuclease.